Here is a 410-residue protein sequence, read N- to C-terminus: Envelope glycoprotein (410 aa).

The Extracellular portion of the chain corresponds to 1–410 (PHQIYNVTWV…VRFRREPISL (410 aa)). N-linked (GlcNAc...) asparagine; by host glycans are attached at residues asparagine 6 and asparagine 21. 2 disulfide bridges follow: cysteine 85/cysteine 107 and cysteine 99/cysteine 112. Residues 193 to 242 (PPQAMGPNLVLPDRKPPSRQSQTGSKVATQRPQTNESAPRSIAPTTMGPK) are disordered. Positions 210–230 (SRQSQTGSKVATQRPQTNESA) are enriched in polar residues. Residues asparagine 227, asparagine 262, and asparagine 267 are each glycosylated (N-linked (GlcNAc...) asparagine; by host). The CXXC signature appears at 272–275 (CWLC). Asparagine 294, asparagine 334, asparagine 350, and asparagine 370 each carry an N-linked (GlcNAc...) asparagine; by host glycan.

The mature envelope protein (Env) consists of a trimer of SU-TM heterodimers attached by a labile interchain disulfide bond. Post-translationally, specific enzymatic cleavages in vivo yield mature proteins. Envelope glycoproteins are synthesized as an inactive precursor that is N-glycosylated and processed likely by host cell furin or by a furin-like protease in the Golgi to yield the mature SU and TM proteins. The cleavage site between SU and TM requires the minimal sequence [KR]-X-[KR]-R.

The protein localises to the virion membrane. It localises to the host cell membrane. Its function is as follows. The surface protein (SU) attaches the virus to the host cell by binding to its receptor. This interaction triggers the refolding of the transmembrane protein (TM) and is thought to activate its fusogenic potential by unmasking its fusion peptide. Fusion occurs at the host cell plasma membrane. Functionally, the transmembrane protein (TM) acts as a class I viral fusion protein. Under the current model, the protein has at least 3 conformational states: pre-fusion native state, pre-hairpin intermediate state, and post-fusion hairpin state. During viral and target cell membrane fusion, the coiled coil regions (heptad repeats) assume a trimer-of-hairpins structure, positioning the fusion peptide in close proximity to the C-terminal region of the ectodomain. The formation of this structure appears to drive apposition and subsequent fusion of viral and target cell membranes. Membranes fusion leads to delivery of the nucleocapsid into the cytoplasm. The sequence is that of Envelope glycoprotein (env) from Feline leukemia virus (strain C/FA27).